The primary structure comprises 317 residues: MYNIILSIFYPIFLALVFPTQIFLFVVVVKYSPKYMQTLRNVLFCNCIFQTISVVLLCLLQLRQVSHLKPMEIWCYGPLRHFEAIISYCLYFVSQSTSVVSNILVLLTIYLKYEAAKNVTNKQSNKCIVIILLLVPVFVLVGAEIYSVVTHSLLPEVRYLFEVINSNVTDHSVIGYITLQTVPSYLIISIVFGSVFLLPPMGLYTRRKIIFHINSGRDTTSQLKKHQRKTFINGLTLQACLPLVSLCPIFVCYVIVIGTKSELLFEQYCISVLVLLPTFFDPYITLYSVAPYRKQIGMWLGKAKTGPMIVISSIMNL.

7 helical membrane passes run 8 to 28 (IFYP…FVVV), 42 to 62 (VLFC…LLQL), 89 to 109 (CLYF…LLTI), 128 to 148 (IVII…IYSV), 185 to 205 (YLII…GLYT), 239 to 259 (ACLP…VIGT), and 270 to 290 (ISVL…YSVA).

Belongs to the nematode receptor-like protein srd family.

The protein localises to the membrane. This is Serpentine receptor class delta-47 (srd-47) from Caenorhabditis elegans.